Consider the following 221-residue polypeptide: Chaperone protein TorD (221 aa).

Belongs to the TorD/DmsD family. TorD subfamily.

It localises to the cytoplasm. Involved in the biogenesis of TorA. Acts on TorA before the insertion of the molybdenum cofactor and, as a result, probably favors a conformation of the apoenzyme that is competent for acquiring the cofactor. In Shewanella pealeana (strain ATCC 700345 / ANG-SQ1), this protein is Chaperone protein TorD.